The following is a 129-amino-acid chain: Small ribosomal subunit protein uS11 (129 aa).

This sequence belongs to the universal ribosomal protein uS11 family. In terms of assembly, part of the 30S ribosomal subunit. Interacts with proteins S7 and S18. Binds to IF-3.

Functionally, located on the platform of the 30S subunit, it bridges several disparate RNA helices of the 16S rRNA. Forms part of the Shine-Dalgarno cleft in the 70S ribosome. This chain is Small ribosomal subunit protein uS11, found in Aliivibrio fischeri (strain ATCC 700601 / ES114) (Vibrio fischeri).